Reading from the N-terminus, the 524-residue chain is 2-isopropylmalate synthase (524 aa).

Positions 12–274 constitute a Pyruvate carboxyltransferase domain; that stretch reads VIIFDTTLRD…WNRIETTMLT (263 aa). Mn(2+) contacts are provided by D21, H209, H211, and N245. Residues 398–524 are regulatory domain; the sequence is KLMSLTVIAG…EDAPTVAVAG (127 aa).

Belongs to the alpha-IPM synthase/homocitrate synthase family. LeuA type 1 subfamily. As to quaternary structure, homodimer. It depends on Mn(2+) as a cofactor.

It is found in the cytoplasm. It catalyses the reaction 3-methyl-2-oxobutanoate + acetyl-CoA + H2O = (2S)-2-isopropylmalate + CoA + H(+). It participates in amino-acid biosynthesis; L-leucine biosynthesis; L-leucine from 3-methyl-2-oxobutanoate: step 1/4. Catalyzes the condensation of the acetyl group of acetyl-CoA with 3-methyl-2-oxobutanoate (2-ketoisovalerate) to form 3-carboxy-3-hydroxy-4-methylpentanoate (2-isopropylmalate). This Rhodopseudomonas palustris (strain TIE-1) protein is 2-isopropylmalate synthase.